Consider the following 143-residue polypeptide: Transcriptional regulator MraZ (143 aa).

SpoVT-AbrB domains follow at residues 5-47 (TYTP…PKEE) and 76-119 (TDEQ…DKQA).

Belongs to the MraZ family. In terms of assembly, forms oligomers.

It is found in the cytoplasm. It localises to the nucleoid. The polypeptide is Transcriptional regulator MraZ (Nocardia farcinica (strain IFM 10152)).